A 156-amino-acid chain; its full sequence is Small ribosomal subunit protein uS7 (156 aa).

It belongs to the universal ribosomal protein uS7 family. As to quaternary structure, part of the 30S ribosomal subunit. Contacts proteins S9 and S11.

In terms of biological role, one of the primary rRNA binding proteins, it binds directly to 16S rRNA where it nucleates assembly of the head domain of the 30S subunit. Is located at the subunit interface close to the decoding center, probably blocks exit of the E-site tRNA. This chain is Small ribosomal subunit protein uS7, found in Pectobacterium carotovorum subsp. carotovorum (strain PC1).